Reading from the N-terminus, the 833-residue chain is V-type proton ATPase 116 kDa subunit a 4 (833 aa).

The Cytoplasmic segment spans residues 1-390 (MASVFRSEEM…DAYGVGSYRE (390 aa)). A helical membrane pass occupies residues 391 to 409 (INPAPYTIITFPFLFAVMF). The Vacuolar segment spans residues 410–411 (GD). A helical membrane pass occupies residues 412–428 (CGHGMVMLMAALWMVLN). Topologically, residues 429–443 (ERHLLAQKSTNEMWN) are cytoplasmic. Residues 444-473 (IFFNGRYLILLMGIFSIYTGLIYNDCFSKS) traverse the membrane as a helical segment. The Vacuolar portion of the chain corresponds to 474–538 (FNIFGSSWSV…ASNKLTFLNS (65 aa)). A helical membrane pass occupies residues 539–558 (YKMKMSVILGIAHMIFGVIL). Over 559–576 (SLFNHIYFRRTLNIILQF) the chain is Cytoplasmic. The helical transmembrane segment at 577–597 (IPEMIFMLSLFGYLVFMIIFK) threads the bilayer. Topologically, residues 598-642 (WCRYDAHTSRKAPSILIHFIGMFLFDYDDSSNAPLYGHQQEVQTF) are vacuolar. A helical membrane pass occupies residues 643–662 (FVIIALVSVPWMLLIKPFVL). Topologically, residues 663–720 (RAKHQKSQLQSFTIHEDAVEGDHSGHSSKKTAGAHGMKDGHEEEFNFGDIFVHQAIHT) are cytoplasmic. The interval 681–700 (VEGDHSGHSSKKTAGAHGMK) is disordered. Residues 721 to 745 (IEYCLGCISNTASYLRLWALSLAHA) traverse the membrane as a helical segment. Residues 746–766 (ELSEVLWTMVMSIGLRLQGWA) are Vacuolar-facing. The helical transmembrane segment at 767–805 (GLVGVFIIFAVFAVLTVAILLVMEGLSAFLHALRLHWVE) threads the bilayer. Over 806 to 833 (FQNKFYEGAGSKFSPFSFKHVLEGTAEE) the chain is Cytoplasmic.

Belongs to the V-ATPase 116 kDa subunit family. In terms of assembly, V-ATPase is a heteromultimeric enzyme made up of two complexes: the ATP-hydrolytic V1 complex and the proton translocation V0 complex. The V1 complex consists of three catalytic AB heterodimers that form a heterohexamer, three peripheral stalks each consisting of EG heterodimers, one central rotor including subunits D and F, and the regulatory subunits C and H. The proton translocation complex V0 consists of the proton transport subunit a, a ring of proteolipid subunits c9c'', rotary subunit d, subunits e and f, and the accessory subunits ATP6AP1/Ac45 and ATP6AP2/PRR. Interacts with the V1 complex V-ATPase subunit A ATP6V1A. Interacts with the V0 complex V-ATPase subunit c ATP6V0C. In terms of tissue distribution, specifically expressed in kidney, but not in the heart, brain, spleen, lung, liver, muscle, or testis. Distribution within the kidney appears more widespread than that seen in man. High intensity staining at the surface of intercalated cells, with additional expression in the proximal tubule.

The protein resides in the apical cell membrane. It is found in the basolateral cell membrane. Functionally, subunit of the V0 complex of vacuolar(H+)-ATPase (V-ATPase), a multisubunit enzyme composed of a peripheral complex (V1) that hydrolyzes ATP and a membrane integral complex (V0) that translocates protons. V-ATPase is responsible for acidifying and maintaining the pH of intracellular compartments and in some cell types, is targeted to the plasma membrane, where it is responsible for acidifying the extracellular environment. Involved in normal vectorial acid transport into the urine by the kidney. The protein is V-type proton ATPase 116 kDa subunit a 4 (Atp6v0a4) of Mus musculus (Mouse).